Here is a 402-residue protein sequence, read N- to C-terminus: Putative RNA-guided DNA endonuclease (402 aa).

The active site involves aspartate 188. The segment at 202–239 (KITNPKHERRDRARLAKAQRDVSRKAKGSANRKKARRK) is disordered. Positions 204 to 225 (TNPKHERRDRARLAKAQRDVSR) are enriched in basic and acidic residues. The span at 226-239 (KAKGSANRKKARRK) shows a compositional bias: basic residues. The active site involves glutamate 272. Residues cysteine 325, cysteine 328, cysteine 344, and cysteine 346 each coordinate Zn(2+). Residue aspartate 353 is part of the active site. The tract at residues 373-402 (GIRPQRESSRTGRSSVKQEPQRATAGIPRL) is disordered.

In the N-terminal section; belongs to the transposase 2 family. It in the C-terminal section; belongs to the transposase 35 family.

In terms of biological role, an RNA-guided dsDNA endonuclease. When guided by an RNA derived from the right-end element of its insertion sequence element (IS), cleaves DNA downstream of the transposon-associated motif (TAM). Cleaves supercoiled and linear DNA in a staggered manner 15-21 bases from the TAM yielding 5'-overhangs. Binds reRNA, an approximately 150 nucleotide base sRNA derived from the 3' end of its own gene, the right end (RE) of the insertion sequence (IS) plus sequence downstream of the IS. In Streptomyces pristinaespiralis, this protein is Putative RNA-guided DNA endonuclease.